A 376-amino-acid chain; its full sequence is MPPTPEVGLPLWLLAELTYRCPLQCPYCSNPLDFAAQGQELSTEQWFKVMAEAREMGAAQIGFSGGEPLVRQDLAQLIAEARRLGYYTNLITSGIGLNEARIADFKKAGLDHIQISFQASDEQVNNLLAGSKKAFAQKLEMARAVKAHGYPMVLNFVTHRHNIDKIDRIIELCIALEADFVELATCQFYGWAHLNRLGLLPTRAQLERAERITNEYRDKLKAEGNPCKLIFVTPDYYEERPKACMNGWGNLFLTITPDGTALPCHGARQLPVQFPNVRDHDLHHIWYESFGFNRFRGYEWMREPCRSCDEKEKDFGGCRCQAFMLTGDASNADPVCAKSTEHGIILKAREEAETAQLAIEQMTFRNDRNSRVIARG.

A Radical SAM core domain is found at 7-222 (VGLPLWLLAE…TNEYRDKLKA (216 aa)). [4Fe-4S] cluster is bound by residues cysteine 21, cysteine 25, and cysteine 28.

The protein belongs to the radical SAM superfamily. PqqE family. As to quaternary structure, interacts with PqqD. The interaction is necessary for activity of PqqE. [4Fe-4S] cluster serves as cofactor.

The catalysed reaction is [PQQ precursor protein] + S-adenosyl-L-methionine = E-Y cross-linked-[PQQ precursor protein] + 5'-deoxyadenosine + L-methionine + H(+). Its pathway is cofactor biosynthesis; pyrroloquinoline quinone biosynthesis. Catalyzes the cross-linking of a glutamate residue and a tyrosine residue in the PqqA protein as part of the biosynthesis of pyrroloquinoline quinone (PQQ). This Pseudomonas putida (strain ATCC 700007 / DSM 6899 / JCM 31910 / BCRC 17059 / LMG 24140 / F1) protein is PqqA peptide cyclase.